A 364-amino-acid polypeptide reads, in one-letter code: Biotin synthase (364 aa).

The Radical SAM core domain occupies 68–303 (CCGNTVDLCS…QQILRYAGGR (236 aa)). [4Fe-4S] cluster is bound by residues Cys86, Cys90, and Cys93. 4 residues coordinate [2Fe-2S] cluster: Cys131, Cys168, Cys228, and Arg298.

This sequence belongs to the radical SAM superfamily. Biotin synthase family. In terms of assembly, homodimer. Requires [4Fe-4S] cluster as cofactor. [2Fe-2S] cluster is required as a cofactor.

The catalysed reaction is (4R,5S)-dethiobiotin + (sulfur carrier)-SH + 2 reduced [2Fe-2S]-[ferredoxin] + 2 S-adenosyl-L-methionine = (sulfur carrier)-H + biotin + 2 5'-deoxyadenosine + 2 L-methionine + 2 oxidized [2Fe-2S]-[ferredoxin]. It participates in cofactor biosynthesis; biotin biosynthesis; biotin from 7,8-diaminononanoate: step 2/2. In terms of biological role, catalyzes the conversion of dethiobiotin (DTB) to biotin by the insertion of a sulfur atom into dethiobiotin via a radical-based mechanism. This is Biotin synthase from Microcystis aeruginosa (strain NIES-843 / IAM M-2473).